Consider the following 398-residue polypeptide: Bifunctional enzyme IspD/IspF (398 aa).

The 2-C-methyl-D-erythritol 4-phosphate cytidylyltransferase stretch occupies residues 1–234 (MPSSKRTAAI…ARLAAALGDI (234 aa)). The tract at residues 235–398 (RTGTGYDVHA…LPWNDKGRDT (164 aa)) is 2-C-methyl-D-erythritol 2,4-cyclodiphosphate synthase. A divalent metal cation is bound by residues Asp241 and His243. 4-CDP-2-C-methyl-D-erythritol 2-phosphate is bound by residues 241–243 (DVH) and 267–268 (HS). Residue His275 participates in a divalent metal cation binding. Residues 289–291 (DIG), 365–368 (TTSE), Phe372, and Arg375 contribute to the 4-CDP-2-C-methyl-D-erythritol 2-phosphate site.

The protein in the N-terminal section; belongs to the IspD/TarI cytidylyltransferase family. IspD subfamily. This sequence in the C-terminal section; belongs to the IspF family. The cofactor is a divalent metal cation.

The enzyme catalyses 2-C-methyl-D-erythritol 4-phosphate + CTP + H(+) = 4-CDP-2-C-methyl-D-erythritol + diphosphate. It catalyses the reaction 4-CDP-2-C-methyl-D-erythritol 2-phosphate = 2-C-methyl-D-erythritol 2,4-cyclic diphosphate + CMP. The protein operates within isoprenoid biosynthesis; isopentenyl diphosphate biosynthesis via DXP pathway; isopentenyl diphosphate from 1-deoxy-D-xylulose 5-phosphate: step 2/6. Its pathway is isoprenoid biosynthesis; isopentenyl diphosphate biosynthesis via DXP pathway; isopentenyl diphosphate from 1-deoxy-D-xylulose 5-phosphate: step 4/6. Functionally, bifunctional enzyme that catalyzes the formation of 4-diphosphocytidyl-2-C-methyl-D-erythritol from CTP and 2-C-methyl-D-erythritol 4-phosphate (MEP) (IspD), and catalyzes the conversion of 4-diphosphocytidyl-2-C-methyl-D-erythritol 2-phosphate (CDP-ME2P) to 2-C-methyl-D-erythritol 2,4-cyclodiphosphate (ME-CPP) with a corresponding release of cytidine 5-monophosphate (CMP) (IspF). In Nitrobacter winogradskyi (strain ATCC 25391 / DSM 10237 / CIP 104748 / NCIMB 11846 / Nb-255), this protein is Bifunctional enzyme IspD/IspF.